An 818-amino-acid chain; its full sequence is Histone H2A deubiquitinase MYSM1 (818 aa).

The SANT domain maps to 107 to 158; sequence SSPVKWTKEEKNLFEQGLATFGRRWTSIARLIGSRSVLQVKNYARHYFKNKC. In terms of domain architecture, SWIRM spans 344–442; that stretch reads IKPPDQELEI…FGCEQAIYNR (99 aa). Residues 548–680 form the MPN domain; sequence VKVSCEAMLV…PHPQSQVACL (133 aa). Zn(2+)-binding residues include H627, H629, and D640. The JAMM motif motif lies at 627–640; it reads HSHPAFDPNPSIRD. Residues 745-749 carry the LXXLL motif motif; sequence LQKLL.

The protein belongs to the peptidase M67A family. MYSM1 subfamily.

It localises to the nucleus. Functionally, metalloprotease that specifically deubiquitinates monoubiquitinated histone H2A, a specific tag for epigenetic transcriptional repression, thereby acting as a coactivator. Preferentially deubiquitinates monoubiquitinated H2A in hyperacetylated nucleosomes. Deubiquitination of histone H2A leads to facilitate the phosphorylation and dissociation of histone H1 from the nucleosome. Acts as a coactivator by participating in the initiation and elongation steps of androgen receptor (AR)-induced gene activation. The sequence is that of Histone H2A deubiquitinase MYSM1 (mysm1) from Xenopus laevis (African clawed frog).